A 231-amino-acid chain; its full sequence is Large ribosomal subunit protein uL1 (231 aa).

This sequence belongs to the universal ribosomal protein uL1 family. In terms of assembly, part of the 50S ribosomal subunit.

Functionally, binds directly to 23S rRNA. The L1 stalk is quite mobile in the ribosome, and is involved in E site tRNA release. Its function is as follows. Protein L1 is also a translational repressor protein, it controls the translation of the L11 operon by binding to its mRNA. The polypeptide is Large ribosomal subunit protein uL1 (Azoarcus sp. (strain BH72)).